The sequence spans 352 residues: D-alanine--D-alanine ligase A (352 aa).

Residues 138 to 341 (KRMVQSAGLV…PPKLVGALVE (204 aa)) enclose the ATP-grasp domain. An ATP-binding site is contributed by 165 to 220 (ECLGSSTLFVKPATSGSSIGVSRVSNALEYAAAFAIAAREDTKVLVEAAVCGREIE). Mg(2+) is bound by residues Asp295, Glu308, and Asn310.

Belongs to the D-alanine--D-alanine ligase family. The cofactor is Mg(2+). Mn(2+) serves as cofactor.

The protein localises to the cytoplasm. It carries out the reaction 2 D-alanine + ATP = D-alanyl-D-alanine + ADP + phosphate + H(+). The protein operates within cell wall biogenesis; peptidoglycan biosynthesis. Its function is as follows. Cell wall formation. This is D-alanine--D-alanine ligase A from Pseudomonas putida (strain ATCC 47054 / DSM 6125 / CFBP 8728 / NCIMB 11950 / KT2440).